The primary structure comprises 736 residues: Gephyrin (736 aa).

Positions 14-153 (QIRVGVLTVS…LPGSKKGSQE (140 aa)) are MPT Mo-transferase. Disordered regions lie at residues 181–232 (DELE…DSSS) and 260–290 (TASLSTTPSESPRAQATSRLSTASCPTPKVQ). Over residues 187 to 199 (PSPPPPLSPPPTT) the composition is skewed to pro residues. The span at 261 to 290 (ASLSTTPSESPRAQATSRLSTASCPTPKVQ) shows a compositional bias: polar residues. The interval 294–736 (SSKENILRAS…VVDVMVIGRL (443 aa)) is MPT adenylyltransferase.

This sequence in the N-terminal section; belongs to the MoaB/Mog family. The protein in the C-terminal section; belongs to the MoeA family. As to quaternary structure, homotrimer, homodimer and homooligomer. Interacts with glycine receptors. Requires Mg(2+) as cofactor.

Its subcellular location is the postsynaptic cell membrane. The protein localises to the cell membrane. It localises to the cytoplasm. It is found in the cytosol. The protein resides in the cytoskeleton. Its subcellular location is the cell projection. The protein localises to the dendrite. It localises to the postsynaptic density. The catalysed reaction is molybdopterin + ATP + H(+) = adenylyl-molybdopterin + diphosphate. It catalyses the reaction adenylyl-molybdopterin + molybdate = Mo-molybdopterin + AMP + H(+). The protein operates within cofactor biosynthesis; molybdopterin biosynthesis. Microtubule-associated protein involved in membrane protein-cytoskeleton interactions. It is thought to anchor the inhibitory glycine receptor (GLYR) to subsynaptic microtubules. Acts as a major instructive molecule at inhibitory synapses, where it also clusters GABA type A receptors. In terms of biological role, also has a catalytic activity and catalyzes two steps in the biosynthesis of the molybdenum cofactor. In the first step, molybdopterin is adenylated. Subsequently, molybdate is inserted into adenylated molybdopterin and AMP is released. The sequence is that of Gephyrin (GPHN) from Gallus gallus (Chicken).